A 378-amino-acid polypeptide reads, in one-letter code: UPF0754 membrane protein BT9727_0767 (378 aa).

2 helical membrane passes run 1 to 21 (MNIW…GGFT) and 357 to 377 (YLGA…LLFL).

It belongs to the UPF0754 family.

Its subcellular location is the cell membrane. In Bacillus thuringiensis subsp. konkukian (strain 97-27), this protein is UPF0754 membrane protein BT9727_0767.